Reading from the N-terminus, the 386-residue chain is Phosphoglycerate kinase (386 aa).

Substrate-binding positions include 21-23, arginine 36, 59-62, arginine 113, and arginine 146; these read DLN and HLGR. ATP contacts are provided by residues lysine 197, glutamate 314, and 340 to 343; that span reads GGDT.

Belongs to the phosphoglycerate kinase family. As to quaternary structure, monomer.

It is found in the cytoplasm. It carries out the reaction (2R)-3-phosphoglycerate + ATP = (2R)-3-phospho-glyceroyl phosphate + ADP. It functions in the pathway carbohydrate degradation; glycolysis; pyruvate from D-glyceraldehyde 3-phosphate: step 2/5. The protein is Phosphoglycerate kinase of Ectopseudomonas mendocina (strain ymp) (Pseudomonas mendocina).